Consider the following 450-residue polypeptide: Bifunctional protein GlmU (450 aa).

A pyrophosphorylase region spans residues 1 to 226; that stretch reads MLAVAVLAAG…ADEVNGINNR (226 aa). UDP-N-acetyl-alpha-D-glucosamine contacts are provided by residues 7–10, Lys-21, Gln-73, and 78–79; these read LAAG and GT. Asp-103 contacts Mg(2+). UDP-N-acetyl-alpha-D-glucosamine contacts are provided by Gly-140, Glu-155, Asn-170, and Asn-224. Asn-224 serves as a coordination point for Mg(2+). The tract at residues 227–247 is linker; that stretch reads RQLAQCEALLQQRLRHHWMDE. An N-acetyltransferase region spans residues 248-450; it reads GVTFIDPESC…TKEGWAERKV (203 aa). Residues Arg-329 and Lys-347 each contribute to the UDP-N-acetyl-alpha-D-glucosamine site. His-359 acts as the Proton acceptor in catalysis. Tyr-362 and Asn-373 together coordinate UDP-N-acetyl-alpha-D-glucosamine. Residues Ala-376, 382-383, Ala-419, and Arg-436 contribute to the acetyl-CoA site; that span reads NY.

The protein in the N-terminal section; belongs to the N-acetylglucosamine-1-phosphate uridyltransferase family. This sequence in the C-terminal section; belongs to the transferase hexapeptide repeat family. In terms of assembly, homotrimer. Mg(2+) is required as a cofactor.

The protein localises to the cytoplasm. It catalyses the reaction alpha-D-glucosamine 1-phosphate + acetyl-CoA = N-acetyl-alpha-D-glucosamine 1-phosphate + CoA + H(+). It carries out the reaction N-acetyl-alpha-D-glucosamine 1-phosphate + UTP + H(+) = UDP-N-acetyl-alpha-D-glucosamine + diphosphate. The protein operates within nucleotide-sugar biosynthesis; UDP-N-acetyl-alpha-D-glucosamine biosynthesis; N-acetyl-alpha-D-glucosamine 1-phosphate from alpha-D-glucosamine 6-phosphate (route II): step 2/2. It participates in nucleotide-sugar biosynthesis; UDP-N-acetyl-alpha-D-glucosamine biosynthesis; UDP-N-acetyl-alpha-D-glucosamine from N-acetyl-alpha-D-glucosamine 1-phosphate: step 1/1. Its pathway is bacterial outer membrane biogenesis; LPS lipid A biosynthesis. In terms of biological role, catalyzes the last two sequential reactions in the de novo biosynthetic pathway for UDP-N-acetylglucosamine (UDP-GlcNAc). The C-terminal domain catalyzes the transfer of acetyl group from acetyl coenzyme A to glucosamine-1-phosphate (GlcN-1-P) to produce N-acetylglucosamine-1-phosphate (GlcNAc-1-P), which is converted into UDP-GlcNAc by the transfer of uridine 5-monophosphate (from uridine 5-triphosphate), a reaction catalyzed by the N-terminal domain. The sequence is that of Bifunctional protein GlmU from Synechococcus sp. (strain CC9605).